The chain runs to 472 residues: LVPESSLFMHQSEDYETEVYPVSFTTEEMDATHKQLKDGLFLKQPDWTEYYVNIMRFVNFTSIHLRGCENLLENQPLMSRMRGMGFDIVLTDPFFPCGALVGNIFSIPVVNFLRGLPCGLDMKVNKCPSPPSYIPVPYSGNTNIMTFPQRVINMAMTVVESYQCSLLYGHYDEMVSKYVGNNMDYRTLLSHGALWLIRNEFTLDWPRPLLPNMVLIGGINCAEKKKNASLPADLEEFVQGSGDDGFIIFTLGSMLPDMPQEKAQHFLDAFRQIPQRVVWRYAGDPPKGLPKNVRLMKWLPQKELLAHPKAKLFLTHGGSHSVYEGICNAVPMLMFPLFAEQGDNGLRMVTRGAAETLNIYDVTSDNLLAALNKILKNKSYKEKITEMSQIHHDRPVAPLDLAIFWTEFVIRHKGASHLRVAAHELNWIQYHSLDVFGFILLILLTVLWVTLKCCLFCTRRCCRRGTAKTKSE.

N-linked (GlcNAc...) asparagine glycans are attached at residues N59, N227, and N377. A helical membrane pass occupies residues 436–456; it reads FGFILLILLTVLWVTLKCCLF.

It belongs to the UDP-glycosyltransferase family.

The protein localises to the microsome membrane. It is found in the endoplasmic reticulum membrane. The enzyme catalyses glucuronate acceptor + UDP-alpha-D-glucuronate = acceptor beta-D-glucuronoside + UDP + H(+). Its function is as follows. UDPGT is of major importance in the conjugation and subsequent elimination of potentially toxic xenobiotics and endogenous compounds. This is UDP-glucuronosyltransferase (ugt3) from Pleuronectes platessa (European plaice).